The sequence spans 123 residues: MIQPQTLLNVADNSGARKLMCIRVIGAAGNQRYARIGDVIIAVIKDAVPQMPLERSEVIRAVIVRTRKEFKGDDGIIIRYDDNAAVIIDQKGNPKGTRVFGAVAEELRELNYTKIVSLAPEVL.

Belongs to the universal ribosomal protein uL14 family. In terms of assembly, part of the 50S ribosomal subunit.

The protein resides in the plastid. It is found in the chloroplast. In terms of biological role, binds to 23S rRNA. This chain is Large ribosomal subunit protein uL14c, found in Saccharum hybrid (Sugarcane).